The primary structure comprises 353 residues: UDP-3-O-acylglucosamine N-acyltransferase (353 aa).

His242 functions as the Proton acceptor in the catalytic mechanism.

Belongs to the transferase hexapeptide repeat family. LpxD subfamily. Homotrimer.

The enzyme catalyses a UDP-3-O-[(3R)-3-hydroxyacyl]-alpha-D-glucosamine + a (3R)-hydroxyacyl-[ACP] = a UDP-2-N,3-O-bis[(3R)-3-hydroxyacyl]-alpha-D-glucosamine + holo-[ACP] + H(+). It participates in bacterial outer membrane biogenesis; LPS lipid A biosynthesis. In terms of biological role, catalyzes the N-acylation of UDP-3-O-acylglucosamine using 3-hydroxyacyl-ACP as the acyl donor. Is involved in the biosynthesis of lipid A, a phosphorylated glycolipid that anchors the lipopolysaccharide to the outer membrane of the cell. The protein is UDP-3-O-acylglucosamine N-acyltransferase of Pseudomonas paraeruginosa (strain DSM 24068 / PA7) (Pseudomonas aeruginosa (strain PA7)).